A 206-amino-acid chain; its full sequence is MKKAVQAKFIKTAILNKDYPIIRSPSGDILPEVAVVGRSNVGKSSLLNHLFEAKHLVKTSATPGKTQALNFFSLNDQIAFADLPGYGYAKVPPSVRKEWGPMVRSYLESRESLKLILFLLDIRRIPNEEDIQFLEWVLYHEKALILVLTKIDKVNQKELRLNTTKILDTLSLMNLHHLYYSVPKNRGRKELMIMIQDALNDEDKQE.

One can recognise an EngB-type G domain in the interval 29–201; sequence ILPEVAVVGR…MIMIQDALND (173 aa). GTP is bound by residues 37–44, 64–68, 82–85, 149–152, and 180–182; these read GRSNVGKS, GKTQA, DLPG, TKID, and YSV. Ser44 and Thr66 together coordinate Mg(2+).

It belongs to the TRAFAC class TrmE-Era-EngA-EngB-Septin-like GTPase superfamily. EngB GTPase family. Mg(2+) serves as cofactor.

Necessary for normal cell division and for the maintenance of normal septation. In Protochlamydia amoebophila (strain UWE25), this protein is Probable GTP-binding protein EngB.